Reading from the N-terminus, the 293-residue chain is Digeranylgeranylglyceryl phosphate synthase (293 aa).

The next 7 helical transmembrane spans lie at 26–46 (LMYGFGVVIGIYVSDPFFSDL), 50–70 (LLGYLTAVFLQASTFALNDYF), 107–127 (FVAAYLISPLAFIFAFAVSVL), 140–160 (FAGNVYIAFTMAAPFLFGSII), 215–235 (IASLFYLTAVSISPIPLFLLP), 237–257 (FLFDLKYAVPVSVTDVLLIYV), and 273–293 (YRKVTLVAMVLGLVGFFAGAF).

Belongs to the UbiA prenyltransferase family. DGGGP synthase subfamily. It depends on Mg(2+) as a cofactor.

It is found in the cell membrane. It carries out the reaction sn-3-O-(geranylgeranyl)glycerol 1-phosphate + (2E,6E,10E)-geranylgeranyl diphosphate = 2,3-bis-O-(geranylgeranyl)-sn-glycerol 1-phosphate + diphosphate. It participates in membrane lipid metabolism; glycerophospholipid metabolism. Its function is as follows. Prenyltransferase that catalyzes the transfer of the geranylgeranyl moiety of geranylgeranyl diphosphate (GGPP) to the C2 hydroxyl of (S)-3-O-geranylgeranylglyceryl phosphate (GGGP). This reaction is the second ether-bond-formation step in the biosynthesis of archaeal membrane lipids. This is Digeranylgeranylglyceryl phosphate synthase from Archaeoglobus fulgidus (strain ATCC 49558 / DSM 4304 / JCM 9628 / NBRC 100126 / VC-16).